The chain runs to 576 residues: Plant intracellular Ras-group-related LRR protein 4 (576 aa).

Residues 130–151 are compositionally biased toward low complexity; it reads AAPAAATTTTSTAAAGSSSSSA. The tract at residues 130–181 is disordered; sequence AAPAAATTTTSTAAAGSSSSSAVGNAERHASSGTNGFTASRVAGTSTSTGRV. A compositionally biased stretch (polar residues) spans 160-180; that stretch reads SSGTNGFTASRVAGTSTSTGR. 11 LRR repeats span residues 272–295, 296–318, 320–341, 342–364, 366–387, 389–410, 411–433, 434–456, 458–481, 482–503, and 505–527; these read LTGL…IGKL, FSLA…IGDL, SLIY…IGRL, LNLE…IGSL, RLKK…IGHC, SLVE…VGKL, EPLE…MASL, TKLK…FCFA, SLIK…IGNL, EMLE…SFGN, and KHLR…IALK. A GVYW; degenerate motif is present at residues 528-535; the sequence is GAQAVVQY.

The protein belongs to the SHOC2 family. As to expression, widely expressed.

Its function is as follows. Leucine-rich repeat protein that likely mediates protein interactions, possibly in the context of signal transduction. The chain is Plant intracellular Ras-group-related LRR protein 4 (IRL4) from Oryza sativa subsp. japonica (Rice).